The primary structure comprises 181 residues: Adenine phosphoribosyltransferase (181 aa).

This sequence belongs to the purine/pyrimidine phosphoribosyltransferase family. As to quaternary structure, homodimer.

It is found in the cytoplasm. It catalyses the reaction AMP + diphosphate = 5-phospho-alpha-D-ribose 1-diphosphate + adenine. Its pathway is purine metabolism; AMP biosynthesis via salvage pathway; AMP from adenine: step 1/1. Functionally, catalyzes a salvage reaction resulting in the formation of AMP, that is energically less costly than de novo synthesis. This Cytophaga hutchinsonii (strain ATCC 33406 / DSM 1761 / CIP 103989 / NBRC 15051 / NCIMB 9469 / D465) protein is Adenine phosphoribosyltransferase.